Here is a 175-residue protein sequence, read N- to C-terminus: Ribosome maturation factor RimM (175 aa).

The 74-residue stretch at 99–172 (ADEYHVSDLI…RLEVDAPPGL (74 aa)) folds into the PRC barrel domain.

It belongs to the RimM family. As to quaternary structure, binds ribosomal protein uS19.

Its subcellular location is the cytoplasm. Functionally, an accessory protein needed during the final step in the assembly of 30S ribosomal subunit, possibly for assembly of the head region. Essential for efficient processing of 16S rRNA. May be needed both before and after RbfA during the maturation of 16S rRNA. It has affinity for free ribosomal 30S subunits but not for 70S ribosomes. This Picosynechococcus sp. (strain ATCC 27264 / PCC 7002 / PR-6) (Agmenellum quadruplicatum) protein is Ribosome maturation factor RimM.